The following is a 166-amino-acid chain: Ribosome maturation factor RimM (166 aa).

One can recognise a PRC barrel domain in the interval 90–165 (NDNDAFSIFY…IITLKNIEGL (76 aa)).

This sequence belongs to the RimM family. Binds ribosomal protein uS19.

It localises to the cytoplasm. In terms of biological role, an accessory protein needed during the final step in the assembly of 30S ribosomal subunit, possibly for assembly of the head region. Essential for efficient processing of 16S rRNA. May be needed both before and after RbfA during the maturation of 16S rRNA. It has affinity for free ribosomal 30S subunits but not for 70S ribosomes. The polypeptide is Ribosome maturation factor RimM (Mesoplasma florum (strain ATCC 33453 / NBRC 100688 / NCTC 11704 / L1) (Acholeplasma florum)).